The following is a 314-amino-acid chain: Methionyl-tRNA formyltransferase (314 aa).

113–116 (SLLP) serves as a coordination point for (6S)-5,6,7,8-tetrahydrofolate.

This sequence belongs to the Fmt family.

It catalyses the reaction L-methionyl-tRNA(fMet) + (6R)-10-formyltetrahydrofolate = N-formyl-L-methionyl-tRNA(fMet) + (6S)-5,6,7,8-tetrahydrofolate + H(+). Functionally, attaches a formyl group to the free amino group of methionyl-tRNA(fMet). The formyl group appears to play a dual role in the initiator identity of N-formylmethionyl-tRNA by promoting its recognition by IF2 and preventing the misappropriation of this tRNA by the elongation apparatus. This is Methionyl-tRNA formyltransferase from Pseudomonas savastanoi pv. phaseolicola (strain 1448A / Race 6) (Pseudomonas syringae pv. phaseolicola (strain 1448A / Race 6)).